The sequence spans 205 residues: Dephospho-CoA kinase (205 aa).

The region spanning 4 to 203 is the DPCK domain; the sequence is KIGITGGIGS…QKIHYLCSAK (200 aa). 12–17 contacts ATP; it reads GSGKSV.

It belongs to the CoaE family.

It is found in the cytoplasm. It carries out the reaction 3'-dephospho-CoA + ATP = ADP + CoA + H(+). Its pathway is cofactor biosynthesis; coenzyme A biosynthesis; CoA from (R)-pantothenate: step 5/5. In terms of biological role, catalyzes the phosphorylation of the 3'-hydroxyl group of dephosphocoenzyme A to form coenzyme A. The chain is Dephospho-CoA kinase from Bacteroides fragilis (strain ATCC 25285 / DSM 2151 / CCUG 4856 / JCM 11019 / LMG 10263 / NCTC 9343 / Onslow / VPI 2553 / EN-2).